The primary structure comprises 297 residues: Homoserine kinase (297 aa).

82–92 (PVSRGLGSSAA) lines the ATP pocket.

The protein belongs to the GHMP kinase family. Homoserine kinase subfamily.

It is found in the cytoplasm. It carries out the reaction L-homoserine + ATP = O-phospho-L-homoserine + ADP + H(+). The protein operates within amino-acid biosynthesis; L-threonine biosynthesis; L-threonine from L-aspartate: step 4/5. Catalyzes the ATP-dependent phosphorylation of L-homoserine to L-homoserine phosphate. The polypeptide is Homoserine kinase (Clostridium botulinum (strain 657 / Type Ba4)).